Reading from the N-terminus, the 432-residue chain is 3-phosphoshikimate 1-carboxyvinyltransferase (432 aa).

Lys-23, Ser-24, and Arg-28 together coordinate 3-phosphoshikimate. Lys-23 contacts phosphoenolpyruvate. The phosphoenolpyruvate site is built by Gly-95 and Arg-123. 4 residues coordinate 3-phosphoshikimate: Ser-167, Gln-169, Asp-317, and Lys-344. Gln-169 provides a ligand contact to phosphoenolpyruvate. The active-site Proton acceptor is Asp-317. Residues Arg-348 and Arg-390 each coordinate phosphoenolpyruvate.

Belongs to the EPSP synthase family. As to quaternary structure, monomer.

Its subcellular location is the cytoplasm. It catalyses the reaction 3-phosphoshikimate + phosphoenolpyruvate = 5-O-(1-carboxyvinyl)-3-phosphoshikimate + phosphate. It participates in metabolic intermediate biosynthesis; chorismate biosynthesis; chorismate from D-erythrose 4-phosphate and phosphoenolpyruvate: step 6/7. In terms of biological role, catalyzes the transfer of the enolpyruvyl moiety of phosphoenolpyruvate (PEP) to the 5-hydroxyl of shikimate-3-phosphate (S3P) to produce enolpyruvyl shikimate-3-phosphate and inorganic phosphate. The polypeptide is 3-phosphoshikimate 1-carboxyvinyltransferase (Staphylococcus aureus (strain Newman)).